The following is an 82-amino-acid chain: Small ribosomal subunit protein uS17 (82 aa).

Belongs to the universal ribosomal protein uS17 family. Part of the 30S ribosomal subunit.

Functionally, one of the primary rRNA binding proteins, it binds specifically to the 5'-end of 16S ribosomal RNA. The polypeptide is Small ribosomal subunit protein uS17 (Nitrobacter winogradskyi (strain ATCC 25391 / DSM 10237 / CIP 104748 / NCIMB 11846 / Nb-255)).